Here is a 138-residue protein sequence, read N- to C-terminus: ATP synthase epsilon chain (138 aa).

Belongs to the ATPase epsilon chain family. In terms of assembly, F-type ATPases have 2 components, CF(1) - the catalytic core - and CF(0) - the membrane proton channel. CF(1) has five subunits: alpha(3), beta(3), gamma(1), delta(1), epsilon(1). CF(0) has three main subunits: a, b and c.

The protein localises to the cell inner membrane. Its function is as follows. Produces ATP from ADP in the presence of a proton gradient across the membrane. The sequence is that of ATP synthase epsilon chain from Acidovorax ebreus (strain TPSY) (Diaphorobacter sp. (strain TPSY)).